Here is a 264-residue protein sequence, read N- to C-terminus: Isoprenyl transferase (264 aa).

Asp43 is an active-site residue. Asp43 is a Mg(2+) binding site. Residues 44–47 (GNGR), Trp48, Arg56, His60, and 88–90 (STE) each bind substrate. The active-site Proton acceptor is the Asn91. Substrate contacts are provided by residues Trp92, Arg94, Arg211, and 217 to 219 (RTS). Glu230 is a binding site for Mg(2+).

Belongs to the UPP synthase family. In terms of assembly, homodimer. It depends on Mg(2+) as a cofactor.

Catalyzes the condensation of isopentenyl diphosphate (IPP) with allylic pyrophosphates generating different type of terpenoids. This Bifidobacterium longum (strain NCC 2705) protein is Isoprenyl transferase.